The following is a 281-amino-acid chain: Protein NipSnap homolog 2 (281 aa).

The N-terminal 27 residues, 1–27 (MAARVLLARGGLLRPAAQSAFLPGLRT), are a transit peptide targeting the mitochondrion.

The protein belongs to the NipSnap family. As to quaternary structure, interacts with CALCOCO2/NDP52, NBR1, SQSTM1/p62, TAX1BP1 and WDFY3/ALFY. Interacts with ATG8 family proteins (MAP1LC3A, MAP1LC3B, MAP1LC3C, GABARAP, GABARAPL1 and GABARAPL2). Interacts with VDAC1.

The protein localises to the mitochondrion matrix. Its subcellular location is the cytoplasm. Functionally, protein involved in mitophagy by facilitating recruitment of the autophagy machinery required for clearance of damaged mitochondria. Accumulates on the mitochondria surface in response to mitochondrial depolarization and acts as a 'eat me' signal by recruiting proteins involved in selective autophagy, such as autophagy receptors (CALCOCO2/NDP52, NBR1, SQSTM1/p62, TAX1BP1 and WDFY3/ALFY) and ATG8 family proteins (MAP1LC3A, MAP1LC3B, MAP1LC3C, GABARAP, GABARAPL1 and GABARAPL2). May act as a positive regulator of L-type calcium channels. This is Protein NipSnap homolog 2 from Mus musculus (Mouse).